The sequence spans 96 residues: Co-chaperonin GroES (96 aa).

This sequence belongs to the GroES chaperonin family. In terms of assembly, heptamer of 7 subunits arranged in a ring. Interacts with the chaperonin GroEL.

The protein resides in the cytoplasm. Functionally, together with the chaperonin GroEL, plays an essential role in assisting protein folding. The GroEL-GroES system forms a nano-cage that allows encapsulation of the non-native substrate proteins and provides a physical environment optimized to promote and accelerate protein folding. GroES binds to the apical surface of the GroEL ring, thereby capping the opening of the GroEL channel. In Solidesulfovibrio magneticus (strain ATCC 700980 / DSM 13731 / RS-1) (Desulfovibrio magneticus), this protein is Co-chaperonin GroES.